A 741-amino-acid polypeptide reads, in one-letter code: ABC transporter D family member 2 (741 aa).

3 helical membrane passes run 39-59 (GSLGKKVFILLALGGGAFSLV), 119-139 (FLSLLYLTALLFARTMLSVSI), and 260-280 (VVVMGWGSPLLMFSYFIVSGF). In terms of domain architecture, ABC transmembrane type-1 spans 131-409 (ARTMLSVSIA…LMVALSQAIG (279 aa)). Residues 518–740 (IKFENVSIVS…DDDHLKKPLS (223 aa)) enclose the ABC transporter domain. 551–558 (GPNGSGKS) is an ATP binding site.

The protein belongs to the ABC transporter superfamily. ABCD family. Peroxisomal fatty acyl CoA transporter (TC 3.A.1.203) subfamily.

It is found in the membrane. The chain is ABC transporter D family member 2 (abcD2) from Dictyostelium discoideum (Social amoeba).